The primary structure comprises 175 residues: ATP synthase subunit delta (175 aa).

It belongs to the ATPase delta chain family. F-type ATPases have 2 components, F(1) - the catalytic core - and F(0) - the membrane proton channel. F(1) has five subunits: alpha(3), beta(3), gamma(1), delta(1), epsilon(1). F(0) has three main subunits: a(1), b(2) and c(10-14). The alpha and beta chains form an alternating ring which encloses part of the gamma chain. F(1) is attached to F(0) by a central stalk formed by the gamma and epsilon chains, while a peripheral stalk is formed by the delta and b chains.

The protein resides in the cell inner membrane. F(1)F(0) ATP synthase produces ATP from ADP in the presence of a proton or sodium gradient. F-type ATPases consist of two structural domains, F(1) containing the extramembraneous catalytic core and F(0) containing the membrane proton channel, linked together by a central stalk and a peripheral stalk. During catalysis, ATP synthesis in the catalytic domain of F(1) is coupled via a rotary mechanism of the central stalk subunits to proton translocation. Functionally, this protein is part of the stalk that links CF(0) to CF(1). It either transmits conformational changes from CF(0) to CF(1) or is implicated in proton conduction. This chain is ATP synthase subunit delta, found in Xylella fastidiosa (strain M12).